Reading from the N-terminus, the 510-residue chain is MSNQSTNDQDQIPSAEDTNDLIAQRQAKLDEISAAGKIAYPNQFKRTDYAEDLQKQFEGITKQEIEENAANGGKTQVSIAGRVMLNRGAFIVIQDMTGRIQLYVARKELDEDSLALIKSLDLGDIIGVSGYIGRSGKGDLYVHIEQITLLTKSLRPMPNKFHGLADTEARYRNRHLDLMTNESSRNTFMIRSQVISGIRKFMLNERFMEVETPMMHPIPGGAVARPFITHHNALDMPLYLRIAPELYLKRLVVGGFERVFEINRSFRNEGVSTRHNPEFTMIEFYQAYADYKDLMDLTERLFNQLAMDILGTTELTYQEETISLKAPFARLSMTDAIAQYAEGFDMSKVADRDYLADYAQNVLKQQVKEGFGIGKLQTIIFEETAEHKLRQPTFITQYPAETSPLARRNDENPEITDRFELFIGGREIANGFSELNDPADQAERFHNQVAEKDAGDDEAMHFDADYIEALAYGLPPTAGEGIGIDRLVMLFTDAASIRDVILFPHMRIKH.

Mg(2+) contacts are provided by Glu-420 and Glu-427.

Belongs to the class-II aminoacyl-tRNA synthetase family. Homodimer. The cofactor is Mg(2+).

The protein resides in the cytoplasm. It carries out the reaction tRNA(Lys) + L-lysine + ATP = L-lysyl-tRNA(Lys) + AMP + diphosphate. This chain is Lysine--tRNA ligase, found in Psychrobacter sp. (strain PRwf-1).